A 181-amino-acid chain; its full sequence is Peptidyl-tRNA hydrolase (181 aa).

Position 14 (Tyr14) interacts with tRNA. Residue His19 is the Proton acceptor of the active site. Residues Phe60, Asn62, and Asn106 each coordinate tRNA.

This sequence belongs to the PTH family. In terms of assembly, monomer.

It is found in the cytoplasm. The catalysed reaction is an N-acyl-L-alpha-aminoacyl-tRNA + H2O = an N-acyl-L-amino acid + a tRNA + H(+). Its function is as follows. Hydrolyzes ribosome-free peptidyl-tRNAs (with 1 or more amino acids incorporated), which drop off the ribosome during protein synthesis, or as a result of ribosome stalling. Catalyzes the release of premature peptidyl moieties from peptidyl-tRNA molecules trapped in stalled 50S ribosomal subunits, and thus maintains levels of free tRNAs and 50S ribosomes. In Campylobacter curvus (strain 525.92), this protein is Peptidyl-tRNA hydrolase.